Reading from the N-terminus, the 345-residue chain is tRNA-specific 2-thiouridylase MnmA (345 aa).

ATP contacts are provided by residues A6–S13 and L32. C100 functions as the Nucleophile in the catalytic mechanism. C100 and C197 are disulfide-bonded. G124 lines the ATP pocket. Residues R146–Q148 form an interaction with tRNA region. C197 serves as the catalytic Cysteine persulfide intermediate.

It belongs to the MnmA/TRMU family.

Its subcellular location is the cytoplasm. It carries out the reaction S-sulfanyl-L-cysteinyl-[protein] + uridine(34) in tRNA + AH2 + ATP = 2-thiouridine(34) in tRNA + L-cysteinyl-[protein] + A + AMP + diphosphate + H(+). Catalyzes the 2-thiolation of uridine at the wobble position (U34) of tRNA, leading to the formation of s(2)U34. In Acidiphilium cryptum (strain JF-5), this protein is tRNA-specific 2-thiouridylase MnmA.